A 226-amino-acid chain; its full sequence is Ribonuclease 3 (226 aa).

Residues 7–129 (LPRLCRTLSY…IIGAVYLDSD (123 aa)) form the RNase III domain. Glu42 provides a ligand contact to Mg(2+). The active site involves Asp46. Asp115 and Glu118 together coordinate Mg(2+). Residue Glu118 is part of the active site. The 71-residue stretch at 156–226 (DAKTLLQEHL…AAQVLELLKK (71 aa)) folds into the DRBM domain.

Belongs to the ribonuclease III family. Homodimer. Requires Mg(2+) as cofactor.

Its subcellular location is the cytoplasm. The enzyme catalyses Endonucleolytic cleavage to 5'-phosphomonoester.. Its function is as follows. Digests double-stranded RNA. Involved in the processing of primary rRNA transcript to yield the immediate precursors to the large and small rRNAs (23S and 16S). Processes some mRNAs, and tRNAs when they are encoded in the rRNA operon. Processes pre-crRNA and tracrRNA of type II CRISPR loci if present in the organism. This Shewanella baltica (strain OS223) protein is Ribonuclease 3.